A 311-amino-acid polypeptide reads, in one-letter code: Biotin synthase (311 aa).

The Radical SAM core domain occupies 32-258 (NGVQFCQLLN…LFPLSRIRLA (227 aa)). Residues Cys47, Cys51, and Cys54 each contribute to the [4Fe-4S] cluster site. Residues Cys91, Cys124, Cys184, and Arg256 each coordinate [2Fe-2S] cluster.

This sequence belongs to the radical SAM superfamily. Biotin synthase family. As to quaternary structure, homodimer. It depends on [4Fe-4S] cluster as a cofactor. Requires [2Fe-2S] cluster as cofactor.

The catalysed reaction is (4R,5S)-dethiobiotin + (sulfur carrier)-SH + 2 reduced [2Fe-2S]-[ferredoxin] + 2 S-adenosyl-L-methionine = (sulfur carrier)-H + biotin + 2 5'-deoxyadenosine + 2 L-methionine + 2 oxidized [2Fe-2S]-[ferredoxin]. It participates in cofactor biosynthesis; biotin biosynthesis; biotin from 7,8-diaminononanoate: step 2/2. In terms of biological role, catalyzes the conversion of dethiobiotin (DTB) to biotin by the insertion of a sulfur atom into dethiobiotin via a radical-based mechanism. This chain is Biotin synthase, found in Methylacidiphilum infernorum (isolate V4) (Methylokorus infernorum (strain V4)).